The primary structure comprises 466 residues: 3-isopropylmalate dehydratase large subunit (466 aa).

[4Fe-4S] cluster-binding residues include C345, C405, and C408.

This sequence belongs to the aconitase/IPM isomerase family. LeuC type 1 subfamily. In terms of assembly, heterodimer of LeuC and LeuD. [4Fe-4S] cluster is required as a cofactor.

The enzyme catalyses (2R,3S)-3-isopropylmalate = (2S)-2-isopropylmalate. It participates in amino-acid biosynthesis; L-leucine biosynthesis; L-leucine from 3-methyl-2-oxobutanoate: step 2/4. In terms of biological role, catalyzes the isomerization between 2-isopropylmalate and 3-isopropylmalate, via the formation of 2-isopropylmaleate. This is 3-isopropylmalate dehydratase large subunit from Microcystis aeruginosa (strain NIES-843 / IAM M-2473).